Consider the following 408-residue polypeptide: RNA-splicing ligase RtcB (408 aa).

Mn(2+) contacts are provided by D75, C78, H168, H185, and H281. 167 to 171 provides a ligand contact to GMP; it reads NHFIE. GMP is bound by residues 281–282, 313–316, S320, 337–340, and K407; these read HN, PGSM, and HGAG. H337 serves as the catalytic GMP-histidine intermediate.

This sequence belongs to the RtcB family. As to quaternary structure, monomer. Mn(2+) is required as a cofactor.

It catalyses the reaction a 3'-end 3'-phospho-ribonucleotide-RNA + a 5'-end dephospho-ribonucleoside-RNA + GTP = a ribonucleotidyl-ribonucleotide-RNA + GMP + diphosphate. The enzyme catalyses a 3'-end 2',3'-cyclophospho-ribonucleotide-RNA + a 5'-end dephospho-ribonucleoside-RNA + GTP + H2O = a ribonucleotidyl-ribonucleotide-RNA + GMP + diphosphate + H(+). Its function is as follows. GTP-dependent RNA ligase that is involved in RNA repair. Joins RNA with 2',3'-cyclic-phosphate or 3'-phosphate ends to RNA with 5'-hydroxy ends. Also acts as a DNA ligase in case of DNA damage by splicing 'dirty' DNA breaks, characterized by 3'-phosphate (or cyclic-phosphate) and 5'-hydroxy ends that cannot be sealed by classical DNA ligases. Repairs tRNA cleaved by colicins D or E5, does not repair damaged 16S rRNA. Functionally, able to catalyze tRNA splicing in vivo in yeast, but bacteria are not known to splice tRNA. This is RNA-splicing ligase RtcB from Escherichia coli (strain K12).